The following is an 862-amino-acid chain: Cone cGMP-specific 3',5'-cyclic phosphodiesterase subunit alpha' (862 aa).

2 consecutive GAF domains span residues 75–224 (SMEK…SLVL) and 256–433 (DIER…GWSV). Residues Ser97, Asn116, 169 to 172 (DKKT), and Thr176 each bind 3',5'-cyclic GMP. Positions 486–819 (DEKDLIRILK…VEWKTRADEY (334 aa)) constitute a PDEase domain. The Proton donor role is filled by His562. Positions 566, 602, 603, and 723 each coordinate a divalent metal cation. Residues 830–842 (KKKEEEAAAKKAE) show a composition bias toward basic and acidic residues. The disordered stretch occupies residues 830-862 (KKKEEEAAAKKAENAAGGGGGGEDGKSKTCIVL). Residue Cys859 is modified to Cysteine methyl ester. Residue Cys859 is the site of S-geranylgeranyl cysteine attachment. Positions 860–862 (IVL) are cleaved as a propeptide — removed in mature form.

Belongs to the cyclic nucleotide phosphodiesterase family. As to quaternary structure, composed of two alpha' subunits that are associated with 3 smaller proteins of 11, 13, and 15 kDa. A divalent metal cation is required as a cofactor.

It localises to the cell membrane. It catalyses the reaction 3',5'-cyclic GMP + H2O = GMP + H(+). Functionally, as cone-specific cGMP phosphodiesterase, it plays an essential role in light detection and cone phototransduction by rapidly decreasing intracellular levels of cGMP. This chain is Cone cGMP-specific 3',5'-cyclic phosphodiesterase subunit alpha' (PDE6C), found in Gallus gallus (Chicken).